Consider the following 177-residue polypeptide: Ribulose bisphosphate carboxylase small subunit, chloroplastic 6 (177 aa).

A chloroplast-targeting transit peptide spans 1–56 (MASSMMASTAAVARVGPAQTNMVAPFNGLRSSVAFPATRKANNDLSTLPSNGGRVS).

Belongs to the RuBisCO small chain family. In terms of assembly, heterohexadecamer of 8 large and 8 small subunits.

It localises to the plastid. It is found in the chloroplast. Its function is as follows. RuBisCO catalyzes two reactions: the carboxylation of D-ribulose 1,5-bisphosphate, the primary event in carbon dioxide fixation, as well as the oxidative fragmentation of the pentose substrate. Both reactions occur simultaneously and in competition at the same active site. Although the small subunit is not catalytic it is essential for maximal activity. The sequence is that of Ribulose bisphosphate carboxylase small subunit, chloroplastic 6 from Lemna gibba (Swollen duckweed).